The chain runs to 439 residues: Glutamate-1-semialdehyde 2,1-aminomutase (439 aa).

N6-(pyridoxal phosphate)lysine is present on Lys270.

Belongs to the class-III pyridoxal-phosphate-dependent aminotransferase family. HemL subfamily. In terms of assembly, homodimer. Pyridoxal 5'-phosphate is required as a cofactor.

The protein resides in the cytoplasm. The enzyme catalyses (S)-4-amino-5-oxopentanoate = 5-aminolevulinate. It functions in the pathway porphyrin-containing compound metabolism; protoporphyrin-IX biosynthesis; 5-aminolevulinate from L-glutamyl-tRNA(Glu): step 2/2. This chain is Glutamate-1-semialdehyde 2,1-aminomutase, found in Kocuria rhizophila (strain ATCC 9341 / DSM 348 / NBRC 103217 / DC2201).